Here is a 132-residue protein sequence, read N- to C-terminus: Seminal vesicle protein SVP-2 (132 aa).

An N-terminal signal peptide occupies residues 1–14 (HLALLLILENQASG). The span at 33-81 (HKEEVEESESSRGQDFDKRRFWEKDDPTGEHVSVRHEHLEKSHIRFKED) shows a compositional bias: basic and acidic residues. Disordered stretches follow at residues 33 to 104 (HKEE…LKRH) and 113 to 132 (VEDQ…MQRV). The propeptide occupies 104 to 132 (HDAMEELVSVEDQALANGADPGKSNMQRV).

To the SVP-1/-3/-4 precursor, particularly in regions where protein processing must occur.

The protein resides in the secreted. In Cavia porcellus (Guinea pig), this protein is Seminal vesicle protein SVP-2.